The sequence spans 193 residues: Putative manganese efflux pump MntP (193 aa).

The next 6 helical transmembrane spans lie at 3–23 (PLSI…AAIG), 37–57 (VRAG…GWML), 66–86 (AAFD…HMIV), 109–131 (LALA…SLAF), 146–166 (CTLS…ALIG), and 171–191 (ILGG…HLSG).

This sequence belongs to the MntP (TC 9.B.29) family.

It is found in the cell inner membrane. Probably functions as a manganese efflux pump. In Xanthomonas campestris pv. campestris (strain 8004), this protein is Putative manganese efflux pump MntP.